We begin with the raw amino-acid sequence, 609 residues long: Numb-like protein (609 aa).

Disordered stretches follow at residues 1–68, 223–283, 372–421, 434–464, and 537–609; these read MSRS…QWQA, GSFR…PVAA, ASAG…EEVS, QQQQQQQQQQQQQAASVAPVPTMPPALQPFP, and AGAF…EIEL. Positions 19–29 are enriched in pro residues; that stretch reads PPAPCGAPGPP. Residues 74–223 form the PID domain; that stretch reads RKGTCSFPVR…ASRTSFAREG (150 aa). 2 positions are modified to phosphoserine: Ser-224 and Ser-228. Residues 233–245 show a composition bias toward basic and acidic residues; it reads PAEREAPDKKKAE. Positions 246-259 are enriched in low complexity; the sequence is AAAAPTVAPGPAQP. Residue Ser-263 is modified to Phosphoserine. The residue at position 279 (Thr-279) is a Phosphothreonine. Residues 409–418 are compositionally biased toward basic and acidic residues; it reads TPSEAERWLE. At Ser-411 the chain carries Phosphoserine. Positions 434 to 446 are enriched in low complexity; the sequence is QQQQQQQQQQQQQ. Composition is skewed to pro residues over residues 454 to 464 and 558 to 573; these read PTMPPALQPFP and NGAPWPPEPAPAPAPE.

In terms of assembly, interacts (via PTB domain) with MAP3K7IP2 (via C-terminal). Interacts (via C-terminal) with TRAF6 (via TRAF domains). Associates with EPS15 and NOTCH1.

It localises to the cytoplasm. Its function is as follows. Plays a role in the process of neurogenesis. Required throughout embryonic neurogenesis to maintain neural progenitor cells, also called radial glial cells (RGCs), by allowing their daughter cells to choose progenitor over neuronal cell fate. Not required for the proliferation of neural progenitor cells before the onset of embryonic neurogenesis. Also required postnatally in the subventricular zone (SVZ) neurogenesis by regulating SVZ neuroblasts survival and ependymal wall integrity. Negative regulator of NF-kappa-B signaling pathway. The inhibition of NF-kappa-B activation is mediated at least in part, by preventing MAP3K7IP2 to interact with polyubiquitin chains of TRAF6 and RIPK1 and by stimulating the 'Lys-48'-linked polyubiquitination and degradation of TRAF6 in cortical neurons. This Homo sapiens (Human) protein is Numb-like protein (NUMBL).